The chain runs to 519 residues: MTEIRLTNTKSRRKEAFEPIDRKNVRLYVCGPTVYDRAHLGNGRPVVVFDVLFRLLRHVYGEGHVTYVRNFTDVDDKINAAALARKDAGDPRSLEALIRERTDETIRWYHEDMDALGALRPTQEPRATEWIGAMIAMIEDLIAKGHAYEREGHVLFRVRSYRDYGALSGRSVDDMIAGARVEVAPFKEDPMDFVLWKPSDDELPGWDSPWGRGRPGWHIECSAMADGLLMKDLPENERSFDIHAGGIDLQFPHHENEIAQSRCAHPEGEFAKVWMHNEMLLVDGKKMSKSLGNFFTVRELIEEYRKQFAVNNIGPAIRLRFLQGHYRAPIDAARHYIEQASVKLGLWWHFISEHLDAPITDKDRRDILATSPVIEALADDLNTPLAVTYIDGLVSRLRGGIQKQGYVDAEMDDLEMVAKRARVAIEFLGFTFDDLEEHHGPVQLKRLKERQLSASADVGVRIGRLLEERAEARKARDFARSDAIRDRLQAAGVLIKDSRDGATWELEPGFDPAKLGEPE.

Cys-30 is a binding site for Zn(2+). Residues 32–42 carry the 'HIGH' region motif; sequence PTVYDRAHLGN. Zn(2+)-binding residues include Cys-221, His-253, and Glu-257. Residues 286–290 carry the 'KMSKS' region motif; sequence KMSKS. Lys-289 lines the ATP pocket.

This sequence belongs to the class-I aminoacyl-tRNA synthetase family. As to quaternary structure, monomer. It depends on Zn(2+) as a cofactor.

It localises to the cytoplasm. It carries out the reaction tRNA(Cys) + L-cysteine + ATP = L-cysteinyl-tRNA(Cys) + AMP + diphosphate. The protein is Cysteine--tRNA ligase of Cereibacter sphaeroides (strain KD131 / KCTC 12085) (Rhodobacter sphaeroides).